Consider the following 55-residue polypeptide: UPF0391 membrane protein Meso_3110 (55 aa).

Helical transmembrane passes span 4 to 24 and 30 to 50; these read WALVFLVVAIIAGALGFGGIA and IAQILFYIFLILLVVSLLFGL.

This sequence belongs to the UPF0391 family.

The protein localises to the cell membrane. This is UPF0391 membrane protein Meso_3110 from Chelativorans sp. (strain BNC1).